The chain runs to 91 residues: Large ribosomal subunit protein uL22 (91 aa).

This sequence belongs to the universal ribosomal protein uL22 family. Part of the 50S ribosomal subunit.

In terms of biological role, this protein binds specifically to 23S rRNA; its binding is stimulated by other ribosomal proteins, e.g. L4, L17, and L20. It is important during the early stages of 50S assembly. It makes multiple contacts with different domains of the 23S rRNA in the assembled 50S subunit and ribosome. Functionally, the globular domain of the protein is located near the polypeptide exit tunnel on the outside of the subunit, while an extended beta-hairpin is found that lines the wall of the exit tunnel in the center of the 70S ribosome. The protein is Large ribosomal subunit protein uL22 (rplV) of Loofah witches'-broom phytoplasma.